A 129-amino-acid polypeptide reads, in one-letter code: Small ribosomal subunit protein uS9 (129 aa).

The disordered stretch occupies residues 97–129 (LKAQGFLTRDPRKKERKKYGRKKARKSFQFSKR). The segment covering 110-129 (KERKKYGRKKARKSFQFSKR) has biased composition (basic residues).

Belongs to the universal ribosomal protein uS9 family.

The polypeptide is Small ribosomal subunit protein uS9 (Chlamydia trachomatis serovar A (strain ATCC VR-571B / DSM 19440 / HAR-13)).